We begin with the raw amino-acid sequence, 293 residues long: Ribosomal protein L11 methyltransferase (293 aa).

Positions 145, 166, 188, and 230 each coordinate S-adenosyl-L-methionine.

The protein belongs to the methyltransferase superfamily. PrmA family.

The protein resides in the cytoplasm. It catalyses the reaction L-lysyl-[protein] + 3 S-adenosyl-L-methionine = N(6),N(6),N(6)-trimethyl-L-lysyl-[protein] + 3 S-adenosyl-L-homocysteine + 3 H(+). Functionally, methylates ribosomal protein L11. This Actinobacillus pleuropneumoniae serotype 7 (strain AP76) protein is Ribosomal protein L11 methyltransferase.